The sequence spans 639 residues: Chaperone protein DnaK (639 aa).

The residue at position 197 (Thr-197) is a Phosphothreonine; by autocatalysis. Residues 600–639 are disordered; that stretch reads SGAQGGAQAGPDMNAGQSNAGQNNGKQDDNVQDADFEEVK. The span at 613–624 shows a compositional bias: low complexity; it reads NAGQSNAGQNNG. Residues 629–639 show a composition bias toward acidic residues; that stretch reads NVQDADFEEVK.

The protein belongs to the heat shock protein 70 family.

Its function is as follows. Acts as a chaperone. This is Chaperone protein DnaK from Bacteroides fragilis (strain ATCC 25285 / DSM 2151 / CCUG 4856 / JCM 11019 / LMG 10263 / NCTC 9343 / Onslow / VPI 2553 / EN-2).